Here is a 400-residue protein sequence, read N- to C-terminus: Na(+)/H(+) antiporter NhaA (400 aa).

11 helical membrane passes run 9 to 29, 60 to 80, 96 to 116, 127 to 147, 155 to 175, 180 to 200, 210 to 230, 263 to 283, 294 to 314, 327 to 347, and 366 to 386; these read FLVS…IAMV, LILW…GLEL, VLPA…FYLF, WAIP…ILGA, IFLV…MAIF, LSLI…ALNL, LILG…ATLA, YFVL…GIGL, VILG…FVAI, WISF…SLFI, and VLIA…IASV.

This sequence belongs to the NhaA Na(+)/H(+) (TC 2.A.33) antiporter family.

It is found in the cell inner membrane. The catalysed reaction is Na(+)(in) + 2 H(+)(out) = Na(+)(out) + 2 H(+)(in). In terms of biological role, na(+)/H(+) antiporter that extrudes sodium in exchange for external protons. This chain is Na(+)/H(+) antiporter NhaA, found in Campylobacter curvus (strain 525.92).